Consider the following 333-residue polypeptide: Procathepsin L (333 aa).

The signal sequence occupies residues 1 to 17 (MNPTLILAAFCLGIASA). Residues 18-113 (TLTFDHSLEA…KVFQEPLFYE (96 aa)) constitute a propeptide, activation peptide. Glu122 lines the Zn(2+) pocket. 2 disulfides stabilise this stretch: Cys135–Cys178 and Cys169–Cys211. Cys138 is a catalytic residue. Residues Glu163, Asp184, Glu199, Glu205, and Glu209 each contribute to the Zn(2+) site. N-linked (GlcNAc...) asparagine glycosylation is present at Asn221. The Zn(2+) site is built by Asp227, Asp250, His253, Asp273, and Asp275. Residues Cys269 and Cys322 are joined by a disulfide bond. The active site involves His276. A propeptide spanning residues 289-291 (ESD) is cleaved from the precursor. Asn300 is an active-site residue.

It belongs to the peptidase C1 family. Dimer of a heavy and a light chain linked by disulfide bonds. Interacts with Long isoform of CD74/Ii chain; the interaction stabilizes the conformation of mature CTSL. During export along the endocytic pathway, pro-CTSL undergoes several proteolytic cleavages to generate the CTSL single-chain and two-chain mature forms, composed of a heavy chain linked to a light chain by disulfide bonds. Autocleavage; produces the single-chain CTSL after cleavage of the propeptide. The cleavage can be intermolecular.

The protein resides in the lysosome. The protein localises to the apical cell membrane. It localises to the cytoplasmic vesicle. Its subcellular location is the secretory vesicle. It is found in the chromaffin granule. The protein resides in the secreted. The protein localises to the extracellular space. It localises to the nucleus. The enzyme catalyses Specificity close to that of papain. As compared to cathepsin B, cathepsin L exhibits higher activity toward protein substrates, but has little activity on Z-Arg-Arg-NHMec, and no peptidyl-dipeptidase activity.. With respect to regulation, inhibited by the propeptide produced by autocleavage. Long isoform of CD74/Ii chain stabilizes the conformation of mature CTSL by binding to its active site and serving as a chaperone to help maintain a pool of mature enzyme in endocytic compartments and extracellular space of APCs. IFNG enhances the conversion into the CTSL mature and active form. Inhibited by CST6. Inhibited by the glycopeptide antibiotic teicoplanin. Inhibited by amantadine. Its function is as follows. Thiol protease important for the overall degradation of proteins in lysosomes. Plays a critical for normal cellular functions such as general protein turnover, antigen processing and bone remodeling. Involved in the solubilization of cross-linked TG/thyroglobulin and in the subsequent release of thyroid hormone thyroxine (T4) by limited proteolysis of TG/thyroglobulin in the thyroid follicle lumen. In neuroendocrine chromaffin cells secretory vesicles, catalyzes the prohormone proenkephalin processing to the active enkephalin peptide neurotransmitter. In thymus, regulates CD4(+) T cell positive selection by generating the major histocompatibility complex class II (MHCII) bound peptide ligands presented by cortical thymic epithelial cells. Also mediates invariant chain processing in cortical thymic epithelial cells. Major elastin-degrading enzyme at neutral pH. Accumulates as a mature and active enzyme in the extracellular space of antigen presenting cells (APCs) to regulate degradation of the extracellular matrix in the course of inflammation. Secreted form generates endostatin from COL18A1. Critical for cardiac morphology and function. Plays an important role in hair follicle morphogenesis and cycling, as well as epidermal differentiation. Required for maximal stimulation of steroidogenesis by TIMP1. (Microbial infection) In cells lacking TMPRSS2 expression, facilitates human coronaviruses SARS-CoV and SARS-CoV-2 infections via a slow acid-activated route with the proteolysis of coronavirus spike (S) glycoproteins in lysosome for entry into host cell. Proteolysis within lysosomes is sufficient to activate membrane fusion by coronaviruses SARS-CoV and EMC (HCoV-EMC) S as well as Zaire ebolavirus glycoproteins. Functionally, functions in the regulation of cell cycle progression through proteolytic processing of the CUX1 transcription factor. Translation initiation at downstream start sites allows the synthesis of isoforms that are devoid of a signal peptide and localize to the nucleus where they cleave the CUX1 transcription factor and modify its DNA binding properties. In Homo sapiens (Human), this protein is Procathepsin L.